The primary structure comprises 861 residues: MGSKSFGNLLDLASGDLLDIPQTPRYLPRVMTVPGIISDVDGYGISDGDSDVISLPCRERKIIVANFLPLNGKKDSETGKWKFSLDNDSPLLHLKDGFSPETEVIYVGSLKTHVDVSEQDEVSHNLFEEFNCVATFLPQDVHKKFYLGFCKQQLWPLFHYMLPMCPDHGERFDRGLWQAYVSANKIFADKVMGVINLEEDYIWIHDYHLMVLPTFLRRRFHRVKLGFFLHSPFPSSEIYRTLPVREELLRGLLNCDLIGFHTFDYARHFLSCCCRMLGLEYESKRGHIALDYLGRTVFLKILPIGIHMGRLESVLNLPATAEKLKEIQEKYRGKKIILGVDDMDIFKGLSLKILAFEHLLQQYPSMLGKIVLIQIVNPARGSGKDVQEARKETYDTVKRINERYGSHDYEPVVLIDRPVPRFEKSAYYALAECCIVNAVRDGMNLVPYKYTVCRQGTPSMNKSLGVSDDLPRTSTLVLSEFIGCSPSLSGAIRVNPWDVDAVADSLYSAITMSDFEKQLRHKKHFHYISTHDVGYWARSFSQDLERASRDHYSKRCWGVGWGLGFRLVALSPNFRRLSIEQTVSAYRRSSKRAIFLDYDGTLVPETSIVKDPSAEVISALKALCSDPNNTIFIVSGRGKVSLSEWLAPCENLGIAAEHGYFTRWNKSSDWETSGLSDDLEWKKVVEPIMRLYTETTDGSNIEAKESALVWHHQDADPDFGSCQAKELLDHLETVLVNEPVIVNRGHQIVEVKPQGVSKGLVTGKILSRMLEDGIAPDFVVCIGDDRSDEEMFENISTTLSAQSSSMSTEIFACTVGRKPSKAKYFLDEVSDVVKLLQGLANTSSPKPRYPSHLRVSFESVV.

The residue at position 5 (Ser5) is a Phosphoserine. Thr32 is subject to Phosphothreonine. The tract at residues 59–546 (ERKIIVANFL…ARSFSQDLER (488 aa)) is glycosyltransferase.

The protein in the N-terminal section; belongs to the glycosyltransferase 20 family. This sequence in the C-terminal section; belongs to the trehalose phosphatase family.

It catalyses the reaction D-glucose 6-phosphate + UDP-alpha-D-glucose = alpha,alpha-trehalose 6-phosphate + UDP + H(+). This chain is Probable alpha,alpha-trehalose-phosphate synthase [UDP-forming] 10 (TPS10), found in Arabidopsis thaliana (Mouse-ear cress).